Here is an 800-residue protein sequence, read N- to C-terminus: Isoamylase 2, chloroplastic (800 aa).

Residues 1 to 10 (MASLPAPPTP) are compositionally biased toward pro residues. A disordered region spans residues 1–22 (MASLPAPPTPLGSCPRGRGGGR). Residues 1–34 (MASLPAPPTPLGSCPRGRGGGRVVARPRRAGLAC) constitute a chloroplast transit peptide.

The protein belongs to the glycosyl hydrolase 13 family. As to quaternary structure, forms a hetero-hexamer composed of five ISA1 and one ISA2. In terms of tissue distribution, highly expressed in developing endosperm and leaves.

It localises to the plastid. The protein localises to the chloroplast. It carries out the reaction Hydrolysis of (1-&gt;6)-alpha-D-glucosidic branch linkages in glycogen, amylopectin and their beta-limit dextrins.. In terms of biological role, starch-debranching enzyme involved in amylopectin biosynthesis in endosperm. Functions by removing excess branches or improper branches that interfere with the formation of double helices of the cluster chains of amylopectin and crystallization of starch. Works together with ISA1 as heterooligomer. The heterooligomer ISA1 and ISA2 possesses higher affinity than the ISA1 homooligomer for various branched polyglucans in vitro, but no marked differences exist in chain preferences for debranching of amylopectin and phytoglycogen between these forms. The sequence is that of Isoamylase 2, chloroplastic from Oryza sativa subsp. japonica (Rice).